A 629-amino-acid chain; its full sequence is tRNA uridine 5-carboxymethylaminomethyl modification enzyme MnmG (629 aa).

FAD contacts are provided by residues 13-18 (GGGHAG), Val125, and Ser180. Position 273–287 (273–287 (GPRYCPSIEDKVMRF)) interacts with NAD(+). Residue Gln370 participates in FAD binding.

It belongs to the MnmG family. As to quaternary structure, homodimer. Heterotetramer of two MnmE and two MnmG subunits. Requires FAD as cofactor.

The protein resides in the cytoplasm. In terms of biological role, NAD-binding protein involved in the addition of a carboxymethylaminomethyl (cmnm) group at the wobble position (U34) of certain tRNAs, forming tRNA-cmnm(5)s(2)U34. The chain is tRNA uridine 5-carboxymethylaminomethyl modification enzyme MnmG from Psychromonas ingrahamii (strain DSM 17664 / CCUG 51855 / 37).